A 526-amino-acid polypeptide reads, in one-letter code: Peptide chain release factor 3 (526 aa).

A tr-type G domain is found at Asp9–Leu277. GTP is bound by residues Ser18 to Thr25, Asp86 to His90, and Asn140 to Asp143.

Belongs to the TRAFAC class translation factor GTPase superfamily. Classic translation factor GTPase family. PrfC subfamily.

Its subcellular location is the cytoplasm. Increases the formation of ribosomal termination complexes and stimulates activities of RF-1 and RF-2. It binds guanine nucleotides and has strong preference for UGA stop codons. It may interact directly with the ribosome. The stimulation of RF-1 and RF-2 is significantly reduced by GTP and GDP, but not by GMP. This chain is Peptide chain release factor 3, found in Shewanella baltica (strain OS155 / ATCC BAA-1091).